The following is a 218-amino-acid chain: Small ribosomal subunit protein uS3 (218 aa).

The KH type-2 domain maps to 38–106 (IRTFLKKKLY…KLVVDIKEVK (69 aa)).

The protein belongs to the universal ribosomal protein uS3 family. As to quaternary structure, part of the 30S ribosomal subunit. Forms a tight complex with proteins S10 and S14.

Functionally, binds the lower part of the 30S subunit head. Binds mRNA in the 70S ribosome, positioning it for translation. This is Small ribosomal subunit protein uS3 from Agathobacter rectalis (strain ATCC 33656 / DSM 3377 / JCM 17463 / KCTC 5835 / VPI 0990) (Eubacterium rectale).